A 420-amino-acid polypeptide reads, in one-letter code: Glycogen synthase kinase-3 beta (420 aa).

The span at 1–22 shows a compositional bias: polar residues; sequence MSGRPRTTSFAESCKPVQQPSA. The tract at residues 1–53 is disordered; it reads MSGRPRTTSFAESCKPVQQPSAFGSMKVSRDKDGSKVTTVVATPGQGPDRPQE. Ser-9 bears the Phosphoserine; by PKB/AKT1, RPS6KA3 and SGK3 mark. Residue Cys-14 is the site of S-palmitoyl cysteine attachment. Residues 56–340 enclose the Protein kinase domain; that stretch reads YTDTKVIGNG…PLEACAHSFF (285 aa). ATP-binding positions include 62-70 and Lys-85; that span reads IGNGSFGVV. Residue Asp-181 is the Proton acceptor of the active site. Position 216 is a phosphotyrosine (Tyr-216). A compositionally biased stretch (low complexity) spans 386–401; it reads AAASTPTNATAASDAN. Residues 386 to 420 form a disordered region; it reads AAASTPTNATAASDANTGDRGQTNNAASASASNST. Ser-389 carries the post-translational modification Phosphoserine. 2 positions are modified to phosphothreonine: Thr-390 and Thr-402. Residues 409–420 are compositionally biased toward low complexity; the sequence is NNAASASASNST.

The protein belongs to the protein kinase superfamily. CMGC Ser/Thr protein kinase family. GSK-3 subfamily. As to quaternary structure, monomer. Interacts with ARRB2, DISC1 and ZBED3. Interacts with CABYR, MMP2, MUC1, NIN and PRUNE1. Interacts with AXIN1; the interaction mediates hyperphosphorylation of CTNNB1 leading to its ubiquitination and destruction. Interacts with and phosphorylates SNAI1. Interacts with DNM1L (via a C-terminal domain). Found in a complex composed of MACF1, APC, AXIN1, CTNNB1 and GSK3B. Interacts with SGK3. Interacts with DAB2IP (via C2 domain); the interaction stimulates GSK3B kinase activation. Interacts (via C2 domain) with PPP2CA. Interacts with the CLOCK-BMAL1 heterodimer. Interacts with the BMAL1. Interacts with CTNND2. Interacts with NCYM. The complex composed, at least, of APC, CTNNB1 and GSK3B interacts with JPT1; the interaction requires the inactive form of GSK3B (phosphorylated at 'Ser-9'). Forms a complex composed of PRKAR2A or PRKAR2B, GSK3B and GSKIP through GSKIP interaction; facilitates PKA-induced phosphorylation and regulates GSK3B activity. Interacts with GSKIP. Interacts with GID8. Interacts with PIWIL2. Interacts with LMBR1L. Interacts with DDX3X. Interacts with BIRC2. Interacts with TNFRSF10B; TNFRSF10B stimulation inhibits GSK3B kinase activity. Interacts with RICTOR; the interaction results in phosphorylation of RICTOR at 'Thr-1695' by GSK3B which facilitates FBXW7-mediated ubiquitination and subsequent degradation of RICTOR. Found in a complex with SLC39A6, SLC39A10 and with GSK3B that controls NCAM1 phosphorylation. Interacts with PKP3 (via ARM repeats); the interaction may be involved in PKP3 protein degradation. In terms of processing, phosphorylated by AKT1 and ILK1. Upon insulin-mediated signaling, the activated PKB/AKT1 protein kinase phosphorylates and deactivates GSK3B, resulting in the dephosphorylation and activation of GYS1. Activated by phosphorylation at Tyr-216. Inactivated by phosphorylation at Ser-9. Phosphorylated in a circadian manner in the hippocampus. Post-translationally, mono-ADP-ribosylation by PARP10 negatively regulates kinase activity. Palmitoylated. Palmitoylation by ZDHHC4 prevents AKT1-mediated phosphorylation. As to expression, expressed in testis, thymus, prostate and ovary and weakly expressed in lung, brain and kidney. Colocalizes with EIF2AK2/PKR and TAU in the Alzheimer disease (AD) brain.

The protein resides in the cytoplasm. Its subcellular location is the nucleus. It localises to the cell membrane. The enzyme catalyses L-seryl-[tau protein] + ATP = O-phospho-L-seryl-[tau protein] + ADP + H(+). The catalysed reaction is L-threonyl-[tau protein] + ATP = O-phospho-L-threonyl-[tau protein] + ADP + H(+). It carries out the reaction L-seryl-[protein] + ATP = O-phospho-L-seryl-[protein] + ADP + H(+). It catalyses the reaction L-threonyl-[protein] + ATP = O-phospho-L-threonyl-[protein] + ADP + H(+). Activated by phosphorylation at Tyr-216. In response to insulin, inhibited by phosphorylation at Ser-9 by PKB/AKT1 and RPS6KA3; phosphorylation at this site causes a conformational change, preventing access of substrates to the active site. Inhibited by IL22 treatment which also triggers phosphorylation at Ser-9, promoting inactivation. Inhibited by lithium. Functionally, constitutively active protein kinase that acts as a negative regulator in the hormonal control of glucose homeostasis, Wnt signaling and regulation of transcription factors and microtubules, by phosphorylating and inactivating glycogen synthase (GYS1 or GYS2), EIF2B, CTNNB1/beta-catenin, APC, AXIN1, DPYSL2/CRMP2, JUN, NFATC1/NFATC, MAPT/TAU and MACF1. Requires primed phosphorylation of the majority of its substrates. In skeletal muscle, contributes to insulin regulation of glycogen synthesis by phosphorylating and inhibiting GYS1 activity and hence glycogen synthesis. May also mediate the development of insulin resistance by regulating activation of transcription factors. Regulates protein synthesis by controlling the activity of initiation factor 2B (EIF2BE/EIF2B5) in the same manner as glycogen synthase. In Wnt signaling, GSK3B forms a multimeric complex with APC, AXIN1 and CTNNB1/beta-catenin and phosphorylates the N-terminus of CTNNB1 leading to its degradation mediated by ubiquitin/proteasomes. Phosphorylates JUN at sites proximal to its DNA-binding domain, thereby reducing its affinity for DNA. Phosphorylates NFATC1/NFATC on conserved serine residues promoting NFATC1/NFATC nuclear export, shutting off NFATC1/NFATC gene regulation, and thereby opposing the action of calcineurin. Phosphorylates MAPT/TAU on 'Thr-548', decreasing significantly MAPT/TAU ability to bind and stabilize microtubules. MAPT/TAU is the principal component of neurofibrillary tangles in Alzheimer disease. Plays an important role in ERBB2-dependent stabilization of microtubules at the cell cortex. Phosphorylates MACF1, inhibiting its binding to microtubules which is critical for its role in bulge stem cell migration and skin wound repair. Probably regulates NF-kappa-B (NFKB1) at the transcriptional level and is required for the NF-kappa-B-mediated anti-apoptotic response to TNF-alpha (TNF/TNFA). Negatively regulates replication in pancreatic beta-cells, resulting in apoptosis, loss of beta-cells and diabetes. Through phosphorylation of the anti-apoptotic protein MCL1, may control cell apoptosis in response to growth factors deprivation. Phosphorylates MUC1 in breast cancer cells, decreasing the interaction of MUC1 with CTNNB1/beta-catenin. Is necessary for the establishment of neuronal polarity and axon outgrowth. Phosphorylates MARK2, leading to inhibition of its activity. Phosphorylates SIK1 at 'Thr-182', leading to sustainment of its activity. Phosphorylates ZC3HAV1 which enhances its antiviral activity. Phosphorylates SNAI1, leading to its ubiquitination and proteasomal degradation. Phosphorylates SFPQ at 'Thr-687' upon T-cell activation. Phosphorylates NR1D1 st 'Ser-55' and 'Ser-59' and stabilizes it by protecting it from proteasomal degradation. Regulates the circadian clock via phosphorylation of the major clock components including BMAL1, CLOCK and PER2. Phosphorylates FBXL2 at 'Thr-404' and primes it for ubiquitination by the SCF(FBXO3) complex and proteasomal degradation. Phosphorylates CLOCK AT 'Ser-427' and targets it for proteasomal degradation. Phosphorylates BMAL1 at 'Ser-17' and 'Ser-21' and primes it for ubiquitination and proteasomal degradation. Phosphorylates OGT at 'Ser-3' or 'Ser-4' which positively regulates its activity. Phosphorylates MYCN in neuroblastoma cells which may promote its degradation. Regulates the circadian rhythmicity of hippocampal long-term potentiation and BMAL1 and PER2 expression. Acts as a regulator of autophagy by mediating phosphorylation of KAT5/TIP60 under starvation conditions, activating KAT5/TIP60 acetyltransferase activity and promoting acetylation of key autophagy regulators, such as ULK1 and RUBCNL/Pacer. Negatively regulates extrinsic apoptotic signaling pathway via death domain receptors. Promotes the formation of an anti-apoptotic complex, made of DDX3X, BRIC2 and GSK3B, at death receptors, including TNFRSF10B. The anti-apoptotic function is most effective with weak apoptotic signals and can be overcome by stronger stimulation. Phosphorylates E2F1, promoting the interaction between E2F1 and USP11, stabilizing E2F1 and promoting its activity. Phosphorylates mTORC2 complex component RICTOR at 'Ser-1235' in response to endoplasmic stress, inhibiting mTORC2. Phosphorylates mTORC2 complex component RICTOR at 'Thr-1695' which facilitates FBXW7-mediated ubiquitination and subsequent degradation of RICTOR. Phosphorylates FXR1, promoting FXR1 ubiquitination by the SCF(FBXO4) complex and FXR1 degradation by the proteasome. Phosphorylates interleukin-22 receptor subunit IL22RA1, preventing its proteasomal degradation. The protein is Glycogen synthase kinase-3 beta of Homo sapiens (Human).